Consider the following 177-residue polypeptide: ATP synthase subunit delta (177 aa).

This sequence belongs to the ATPase delta chain family. As to quaternary structure, F-type ATPases have 2 components, F(1) - the catalytic core - and F(0) - the membrane proton channel. F(1) has five subunits: alpha(3), beta(3), gamma(1), delta(1), epsilon(1). F(0) has three main subunits: a(1), b(2) and c(10-14). The alpha and beta chains form an alternating ring which encloses part of the gamma chain. F(1) is attached to F(0) by a central stalk formed by the gamma and epsilon chains, while a peripheral stalk is formed by the delta and b chains.

It localises to the cell inner membrane. Its function is as follows. F(1)F(0) ATP synthase produces ATP from ADP in the presence of a proton or sodium gradient. F-type ATPases consist of two structural domains, F(1) containing the extramembraneous catalytic core and F(0) containing the membrane proton channel, linked together by a central stalk and a peripheral stalk. During catalysis, ATP synthesis in the catalytic domain of F(1) is coupled via a rotary mechanism of the central stalk subunits to proton translocation. Functionally, this protein is part of the stalk that links CF(0) to CF(1). It either transmits conformational changes from CF(0) to CF(1) or is implicated in proton conduction. The protein is ATP synthase subunit delta of Haemophilus ducreyi (strain 35000HP / ATCC 700724).